The chain runs to 200 residues: Large ribosomal subunit protein uL4 (200 aa).

Residues 38-68 (GRQGSKQQKTRSDVRGGGKRPWRQKGTGRAR) are disordered. Over residues 54–65 (GGKRPWRQKGTG) the composition is skewed to basic residues.

Belongs to the universal ribosomal protein uL4 family. Part of the 50S ribosomal subunit.

Functionally, one of the primary rRNA binding proteins, this protein initially binds near the 5'-end of the 23S rRNA. It is important during the early stages of 50S assembly. It makes multiple contacts with different domains of the 23S rRNA in the assembled 50S subunit and ribosome. In terms of biological role, forms part of the polypeptide exit tunnel. This is Large ribosomal subunit protein uL4 from Pseudomonas fluorescens (strain Pf0-1).